A 234-amino-acid chain; its full sequence is Staphylococcal superantigen-like 5 (234 aa).

An N-terminal signal peptide occupies residues 1–30 (MKMTAIAKASLALGILATGTITSLHQTVNA).

It belongs to the staphylococcal/streptococcal toxin family. Interacts with host SELPLG; this interaction prevents SELPLG-mediated neutrophil rolling. Interacts with host MMP9 (via sialic acid-containing O-glycans); this interaction inhibits MMP9 activity. Interacts with host GP1BA and GP6; these interactions play an important role in platelet binding and activation.

In terms of biological role, secreted protein that plays a role in the inhibition of host innate immune system. Modulates the interaction between host SELPLG and P-selectin thereby preventing initial rolling of neutrophils toward the site of infection. Interferes with leukocyte trafficking by inhibiting host metalloproteinase-9/MMP9 activity. Also associates with two different platelet surface receptors GP1A and GP6 leading to platelet activation and aggregation. The chain is Staphylococcal superantigen-like 5 from Staphylococcus aureus (strain NCTC 8325 / PS 47).